A 377-amino-acid polypeptide reads, in one-letter code: Putative glutamate--cysteine ligase 2 (377 aa).

This sequence belongs to the glutamate--cysteine ligase type 2 family. YbdK subfamily.

It catalyses the reaction L-cysteine + L-glutamate + ATP = gamma-L-glutamyl-L-cysteine + ADP + phosphate + H(+). ATP-dependent carboxylate-amine ligase which exhibits weak glutamate--cysteine ligase activity. The polypeptide is Putative glutamate--cysteine ligase 2 (Pseudomonas aeruginosa (strain ATCC 15692 / DSM 22644 / CIP 104116 / JCM 14847 / LMG 12228 / 1C / PRS 101 / PAO1)).